The primary structure comprises 322 residues: MKIGNYQLKNKLIVAPMAGVTDRPFRELCLRYGAGMAVSEMMSSNPQLWKTSKSKQRMVHEGESGIRSVQIAGSDPQLMADAAQFSVENGAQIIDINMGCPAKKVNKKLAGSALLKYPDIIEQILKAVVDAVDVPVTLKTRTGWDTENKNCIHIAKLAEDCGIQALALHGRTKACMYKGEAEYDSIKAVKQAVSIPVIANGDIDSPEKAKYVLEYTGADALMIGRPAQGRPWIFQEIHHYLENGTTMPELPIEEVKSIMLGHVQALHEFYGEYLGPRIARKHVGWYLKEHEQASEFRRTFNAIDAAMLQLEALEGYFDNVAS.

Residues 16–18 and Gln70 contribute to the FMN site; that span reads PMA. Cys100 (proton donor) is an active-site residue. FMN contacts are provided by residues Lys139, 200-202, and 224-225; these read NGD and GR.

This sequence belongs to the Dus family. DusB subfamily. Requires FMN as cofactor.

The enzyme catalyses a 5,6-dihydrouridine in tRNA + NAD(+) = a uridine in tRNA + NADH + H(+). It carries out the reaction a 5,6-dihydrouridine in tRNA + NADP(+) = a uridine in tRNA + NADPH + H(+). In terms of biological role, catalyzes the synthesis of 5,6-dihydrouridine (D), a modified base found in the D-loop of most tRNAs, via the reduction of the C5-C6 double bond in target uridines. In Vibrio vulnificus (strain CMCP6), this protein is tRNA-dihydrouridine synthase B.